A 72-amino-acid polypeptide reads, in one-letter code: MDARTPEVPCGDLLQNAAENLLQEVEEHFQALTATLNLRMEEMGNRIEDLQRNVDDLMAQAGIENSIKEATT.

Residues 12-66 (DLLQNAAENLLQEVEEHFQALTATLNLRMEEMGNRIEDLQRNVDDLMAQAGIENS) adopt a coiled-coil conformation.

The protein belongs to the HSBP1 family.

The polypeptide is Heat shock factor-binding protein 1-like protein 1 (Hsbp1l1) (Rattus norvegicus (Rat)).